We begin with the raw amino-acid sequence, 721 residues long: Polyribonucleotide nucleotidyltransferase (721 aa).

Positions 495 and 501 each coordinate Mg(2+). One can recognise a KH domain in the interval 562-621 (PRLLSFRIDPELIGTVIGPGGRTIKGITERTNTKIDIEDGGIVTIASHDGAAAEEAQKII). Positions 631 to 699 (GEIFSGVVTR…SRGRINLTLR (69 aa)) constitute an S1 motif domain. The interval 701 to 721 (VGQNNGMSYPEPTPTPVAPLN) is disordered. The span at 711–721 (EPTPTPVAPLN) shows a compositional bias: pro residues.

The protein belongs to the polyribonucleotide nucleotidyltransferase family. Mg(2+) is required as a cofactor.

The protein localises to the cytoplasm. It carries out the reaction RNA(n+1) + phosphate = RNA(n) + a ribonucleoside 5'-diphosphate. Involved in mRNA degradation. Catalyzes the phosphorolysis of single-stranded polyribonucleotides processively in the 3'- to 5'-direction. The sequence is that of Polyribonucleotide nucleotidyltransferase from Prochlorococcus marinus (strain MIT 9215).